A 1187-amino-acid polypeptide reads, in one-letter code: Protein CHROMATIN REMODELING 8 (1187 aa).

Residues 1-55 (MEEDEDQFLLSSLGVTSANPEDLEQKILDEATKKPDNDEGGSVEEKSTQLEGTNL) are disordered. Residues 9–19 (LLSSLGVTSAN) show a composition bias toward polar residues. The span at 23–48 (LEQKILDEATKKPDNDEGGSVEEKST) shows a compositional bias: basic and acidic residues. A coiled-coil region spans residues 110-170 (LQHALATDRL…LKRKLKEIRK (61 aa)). A Nuclear localization signal 1 motif is present at residues 162 to 169 (KRKLKEIR). Disordered stretches follow at residues 223–247 (GFER…DENE) and 273–343 (DAED…DGRR). 2 consecutive short sequence motifs (nuclear localization signal) follow at residues 290–297 (LRKLYKTP) and 310–317 (GKKSKKTR). Basic residues predominate over residues 305 to 328 (KKRKAGKKSKKTRPLPEKKWRKRI). The Helicase ATP-binding domain occupies 397–594 (WELHCQRAGG…WSLFDFVFPG (198 aa)). 410 to 417 (DEMGLGKT) serves as a coordination point for ATP. The disordered stretch occupies residues 467–501 (SAQDSGHGKGQGKASESDYDSESSVDSDHEPKSKN). Residues 492-501 (DSDHEPKSKN) show a composition bias toward basic and acidic residues. The DEGH box signature appears at 545–548 (DEGH). The region spanning 730 to 890 (KVVAEVLKVW…RRFFKARDMK (161 aa)) is the Helicase C-terminal domain. Residues 987–1016 (NANDEEEKMRLEHQASQVAQRAAEALRQSR) are a coiled coil. Polar residues predominate over residues 1050–1059 (VNSRLTQTGD). The disordered stretch occupies residues 1050-1075 (VNSRLTQTGDKPSAIKNGISAGLSSG).

Belongs to the SNF2/RAD54 helicase family. Homodimer. Binds DNA.

It localises to the nucleus. In terms of biological role, essential factor involved in transcription-coupled nucleotide excision repair (TCR) which allows RNA polymerase II-blocking lesions to be rapidly removed from the transcribed strand of active genes. Upon DNA-binding, it locally modifies DNA conformation by wrapping the DNA around itself, thereby modifying the interface between stalled RNA polymerase II and DNA. It is required for transcription-coupled repair complex formation. This is Protein CHROMATIN REMODELING 8 from Arabidopsis thaliana (Mouse-ear cress).